Consider the following 343-residue polypeptide: Single-pass membrane and coiled-coil domain-containing protein 2 (343 aa).

Basic and acidic residues predominate over residues 86 to 99; the sequence is EHDQDLSKQDKQET. The segment at 86-108 is disordered; that stretch reads EHDQDLSKQDKQETDVDEDPQAS. Residues 152–238 adopt a coiled-coil conformation; sequence TEKIDNIIKK…SAKLRMYQME (87 aa). The chain crosses the membrane as a helical span at residues 284-304; that stretch reads IFIMFDVLTVTGLLCYILFFG.

It localises to the membrane. The protein is Single-pass membrane and coiled-coil domain-containing protein 2 (SMCO2) of Homo sapiens (Human).